The following is a 639-amino-acid chain: UvrABC system protein C (639 aa).

The 78-residue stretch at Glu20 to Ile97 folds into the GIY-YIG domain. Residues Lys207–Val242 form the UVR domain.

This sequence belongs to the UvrC family. Interacts with UvrB in an incision complex.

Its subcellular location is the cytoplasm. Its function is as follows. The UvrABC repair system catalyzes the recognition and processing of DNA lesions. UvrC both incises the 5' and 3' sides of the lesion. The N-terminal half is responsible for the 3' incision and the C-terminal half is responsible for the 5' incision. The chain is UvrABC system protein C from Rickettsia rickettsii (strain Iowa).